The following is a 31-amino-acid chain: uncharacterized protein (31 aa).

This is an uncharacterized protein from Archaeoglobus fulgidus (strain ATCC 49558 / DSM 4304 / JCM 9628 / NBRC 100126 / VC-16).